The following is a 1576-amino-acid chain: Protein Shroom (1576 aa).

Disordered stretches follow at residues 1–31 (MKMRNHKENGNGSEMGESTKSLAKMEPENNN), 46–100 (SNGA…TQAG), 112–142 (YDQTAFHHQKQPSYAQSEGYHSYVSSSDSTS), 187–244 (RQSH…SSTE), 267–434 (ISES…ISVT), 589–609 (VERQQQQQKEEQQLLRPHSQS), and 621–660 (PNNLSPIMVGLPTGSNSASTRDCSSPTPPPPPRRSGSLLP). Residues 10–21 (GNGSEMGESTKS) show a composition bias toward polar residues. 3 stretches are compositionally biased toward low complexity: residues 46-69 (SNGANSRSSNSNASFSSASVAGSV), 76-91 (HNSSSSQLGQQHGSSL), and 128-142 (SEGYHSYVSSSDSTS). Positions 189–211 (SHSHSHSHAHSHSNSHGHSHGHA) are enriched in basic residues. Low complexity-rich tracts occupy residues 212–244 (HSASSSSSSNNNSNGSATNNNNNNSSESTSSTE) and 267–283 (ISESVSSSQRIVHSSRV). Over residues 305–317 (DSSPTASNSSQMM) the composition is skewed to polar residues. Residues 376–388 (QSTLSTQSSLLEL) are compositionally biased toward low complexity. Positions 399–415 (MGQSHSMGDLQQKNPHQ) are enriched in polar residues. Position 404 is a phosphoserine (Ser404). The tract at residues 445 to 920 (APQPPAGKPS…LESNQQKRSN (476 aa)) is F-actin binding region required for planar polarity and cortical localization. A compositionally biased stretch (polar residues) spans 633–643 (TGSNSASTRDC). Residues Ser667 and Ser668 each carry the phosphoserine modification. Disordered stretches follow at residues 699 to 728 (ISFNDCGMPPPPPPPRGRLAVPTRRTSSAT), 743 to 823 (AALA…NCFA), 849 to 876 (VPKKPTSLQHKHLANGGGGSRKRPHHAT), 910 to 939 (NLESNQQKRSNSKASYLPRQSLEKLNNTDP), 1036 to 1055 (GYGKSSKPVTPQQYTRSQSY), 1091 to 1116 (PTATPTPTPTPTPTPPRLSPASSHSD), and 1210 to 1244 (SFANEPLMTPPLPPSPPPPLEPEEEEEQEENDVHD). Residues 748-759 (QQHHPQQHRHAQ) show a composition bias toward basic residues. The segment covering 798 to 816 (PLPPPPPPEVLQPRPPPSP) has biased composition (pro residues). Polar residues-rich tracts occupy residues 910-923 (NLESNQQKRSNSKA) and 1042-1055 (KPVTPQQYTRSQSY). 2 stretches are compositionally biased toward pro residues: residues 1094–1108 (TPTPTPTPTPTPPRL) and 1217–1229 (MTPPLPPSPPPPL). Residues 1230 to 1239 (EPEEEEEQEE) show a composition bias toward acidic residues. The stretch at 1232–1296 (EEEEEQEEND…LEAAREEHQT (65 aa)) forms a coiled coil. The ASD2 domain maps to 1305-1572 (RQPIELDYEQ…QLSSLSDALV (268 aa)).

Belongs to the shroom family. In terms of assembly, monomer or homodimer. Interacts with Rok. As to quaternary structure, binds (via N-terminus) to F-actin.

The protein localises to the cell junction. Its subcellular location is the adherens junction. It localises to the cytoplasm. It is found in the cytoskeleton. The protein resides in the apical cell membrane. Its function is as follows. Binds to Rho-kinase Rok and targets it to the apical cell cortex where it mediates apical constriction. During embryogenic axis elongation, required for the localization to adherens junctions and the establishment of planar polarization of both Rho-kinase Rok and myosin regulatory light chain sqh. May be involved in the assembly of microtubule arrays during cell elongation. This is Protein Shroom from Drosophila melanogaster (Fruit fly).